The primary structure comprises 249 residues: CDP-diacylglycerol pyrophosphatase (249 aa).

The chain crosses the membrane as a helical span at residues 7 to 27; that stretch reads FLLAVVIVAAVAGIGYWKLAA.

The protein belongs to the Cdh family.

The protein localises to the cell inner membrane. It carries out the reaction a CDP-1,2-diacyl-sn-glycerol + H2O = a 1,2-diacyl-sn-glycero-3-phosphate + CMP + 2 H(+). The protein operates within phospholipid metabolism; CDP-diacylglycerol degradation; phosphatidate from CDP-diacylglycerol: step 1/1. The chain is CDP-diacylglycerol pyrophosphatase from Citrobacter koseri (strain ATCC BAA-895 / CDC 4225-83 / SGSC4696).